The primary structure comprises 161 residues: Ribosomal RNA large subunit methyltransferase H (161 aa).

S-adenosyl-L-methionine is bound by residues Leu78, Gly110, and 129–134 (LSRLTF).

The protein belongs to the RNA methyltransferase RlmH family. Homodimer.

The protein localises to the cytoplasm. The catalysed reaction is pseudouridine(1915) in 23S rRNA + S-adenosyl-L-methionine = N(3)-methylpseudouridine(1915) in 23S rRNA + S-adenosyl-L-homocysteine + H(+). Functionally, specifically methylates the pseudouridine at position 1915 (m3Psi1915) in 23S rRNA. This is Ribosomal RNA large subunit methyltransferase H from Heliobacterium modesticaldum (strain ATCC 51547 / Ice1).